A 162-amino-acid polypeptide reads, in one-letter code: Colicin V production protein (162 aa).

Residues 1–21 (MVWIDYAIIAVIAFSSLVSLI) traverse the membrane as a helical segment. Topologically, residues 22–31 (RGFVREALSL) are cytoplasmic. Residues 32–52 (VTWGCAFFVASHYYTYLSVWF) traverse the membrane as a helical segment. Topologically, residues 53-63 (TGFEDELVRNG) are periplasmic. A helical membrane pass occupies residues 64-84 (IAIAVLFIATLIVGAIVNFVI). The Cytoplasmic segment spans residues 85-98 (GQLVEKTGLSGTDR). A helical membrane pass occupies residues 99–119 (VLGVCFGALRGVLIVAAILFF). Over 120–162 (LDSFTGVSKSEDWSKSQLIPQFSFIIRCFFDYLQSSSSFLPRA) the chain is Periplasmic.

The protein localises to the cell inner membrane. Required for colicin V production from plasmid IncFI ColV3-K30. In Escherichia coli (strain K12), this protein is Colicin V production protein (cvpA).